The sequence spans 363 residues: Sulfate/thiosulfate import ATP-binding protein CysA (363 aa).

In terms of domain architecture, ABC transporter spans 3–237 (IEINNISKYF…PATRFVLEFL (235 aa)). 35–42 (GPSGSGKT) contributes to the ATP binding site.

This sequence belongs to the ABC transporter superfamily. Sulfate/tungstate importer (TC 3.A.1.6) family. The complex is composed of two ATP-binding proteins (CysA), two transmembrane proteins (CysT and CysW) and a solute-binding protein (CysP).

The protein localises to the cell inner membrane. The catalysed reaction is sulfate(out) + ATP + H2O = sulfate(in) + ADP + phosphate + H(+). It catalyses the reaction thiosulfate(out) + ATP + H2O = thiosulfate(in) + ADP + phosphate + H(+). In terms of biological role, part of the ABC transporter complex CysAWTP involved in sulfate/thiosulfate import. Responsible for energy coupling to the transport system. The chain is Sulfate/thiosulfate import ATP-binding protein CysA from Yersinia pestis.